Reading from the N-terminus, the 311-residue chain is Olfactory receptor 1073 (311 aa).

Residues 1–25 lie on the Extracellular side of the membrane; the sequence is MKQQNDTQILQFLLLGLSENTELQP. An N-linked (GlcNAc...) asparagine glycan is attached at N5. A helical transmembrane segment spans residues 26 to 46; the sequence is LIYWLFFSMYLVTVWGNLIII. Residues 47-57 are Cytoplasmic-facing; sequence LATVLDFRLHT. Residues 58–78 form a helical membrane-spanning segment; the sequence is AMYFFLCNLSFVDICLISTTI. The Extracellular portion of the chain corresponds to 79–97; sequence PKMLANVHLNHKAITYEGC. A disulfide bridge connects residues C97 and C179. The chain crosses the membrane as a helical span at residues 98 to 118; sequence IMQIYFFTLFVGLDNFLLAVM. Topologically, residues 119-133 are cytoplasmic; the sequence is AYDRFVAICHPLRYT. The helical transmembrane segment at 134–154 threads the bilayer; the sequence is SIMTPHLCMSLVLVSWIASVL. An N-linked (GlcNAc...) asparagine glycan is attached at N155. At 155–196 the chain is on the extracellular side; the sequence is NSSLQSFLVLQLSFCTEVEIPHFFCELSMLVHLACSDTFLSD. A helical transmembrane segment spans residues 197–217; the sequence is MAMNVLAALLGGGCLVGILYS. Over 218–244 the chain is Cytoplasmic; it reads YSKIVSSIQAISSAEGKYKAFSTCVSH. A helical transmembrane segment spans residues 245–265; sequence LSVVSLFYCTLLGVYLSSAVT. Residues 266–271 are Extracellular-facing; sequence QNSHST. The chain crosses the membrane as a helical span at residues 272-292; sequence AATSLMYTVVTPMLNPFIYSL. The Cytoplasmic segment spans residues 293 to 311; the sequence is RNDNIKRALKNFVKKKLEK.

It belongs to the G-protein coupled receptor 1 family. As to expression, tongue specific.

The protein resides in the cell membrane. Functionally, possible taste receptor. This is Olfactory receptor 1073 (Olr1073) from Rattus norvegicus (Rat).